The following is a 397-amino-acid chain: Elongation factor Tu (397 aa).

Residues 10 to 207 (KPHCNIGTIG…EVDKYIPQPE (198 aa)) form the tr-type G domain. The G1 stretch occupies residues 19-26 (GHVDHGKT). 19-26 (GHVDHGKT) provides a ligand contact to GTP. Threonine 26 is a binding site for Mg(2+). Residues 61–65 (GITIS) are G2. The segment at 82-85 (DCPG) is G3. GTP-binding positions include 82–86 (DCPGH) and 137–140 (NKCD). Positions 137 to 140 (NKCD) are G4. Residues 175-177 (SAL) are G5.

This sequence belongs to the TRAFAC class translation factor GTPase superfamily. Classic translation factor GTPase family. EF-Tu/EF-1A subfamily. Monomer.

Its subcellular location is the cytoplasm. It catalyses the reaction GTP + H2O = GDP + phosphate + H(+). Its function is as follows. GTP hydrolase that promotes the GTP-dependent binding of aminoacyl-tRNA to the A-site of ribosomes during protein biosynthesis. In Azorhizobium caulinodans (strain ATCC 43989 / DSM 5975 / JCM 20966 / LMG 6465 / NBRC 14845 / NCIMB 13405 / ORS 571), this protein is Elongation factor Tu.